Reading from the N-terminus, the 244-residue chain is tRNA pseudouridine synthase A 2 (244 aa).

The Nucleophile role is filled by Asp-52. Residue Tyr-110 participates in substrate binding.

Belongs to the tRNA pseudouridine synthase TruA family. As to quaternary structure, homodimer.

The enzyme catalyses uridine(38/39/40) in tRNA = pseudouridine(38/39/40) in tRNA. Functionally, formation of pseudouridine at positions 38, 39 and 40 in the anticodon stem and loop of transfer RNAs. The chain is tRNA pseudouridine synthase A 2 from Clostridium perfringens (strain 13 / Type A).